Consider the following 361-residue polypeptide: Peptide chain release factor 1 (361 aa).

Q235 is modified (N5-methylglutamine). The tract at residues 284-306 is disordered; sequence SQQATAEAMTRKLQVGSGDRSQR.

This sequence belongs to the prokaryotic/mitochondrial release factor family. In terms of processing, methylated by PrmC. Methylation increases the termination efficiency of RF1.

It is found in the cytoplasm. Functionally, peptide chain release factor 1 directs the termination of translation in response to the peptide chain termination codons UAG and UAA. The protein is Peptide chain release factor 1 of Xylella fastidiosa (strain 9a5c).